Reading from the N-terminus, the 882-residue chain is Valine--tRNA ligase (882 aa).

The 'HIGH' region motif lies at 48–58 (PNVTGKLHLGH). The short motif at 524 to 528 (KMSKS) is the 'KMSKS' region element. K527 lines the ATP pocket. Residues 809–882 (LAELLDLDEE…KRLAELKAAR (74 aa)) are a coiled coil. The disordered stretch occupies residues 844-866 (GFTDRAPEKVVQEERDKQADYEQ). Positions 845–863 (FTDRAPEKVVQEERDKQAD) are enriched in basic and acidic residues.

The protein belongs to the class-I aminoacyl-tRNA synthetase family. ValS type 1 subfamily. As to quaternary structure, monomer.

The protein localises to the cytoplasm. It catalyses the reaction tRNA(Val) + L-valine + ATP = L-valyl-tRNA(Val) + AMP + diphosphate. Catalyzes the attachment of valine to tRNA(Val). As ValRS can inadvertently accommodate and process structurally similar amino acids such as threonine, to avoid such errors, it has a 'posttransfer' editing activity that hydrolyzes mischarged Thr-tRNA(Val) in a tRNA-dependent manner. This is Valine--tRNA ligase from Latilactobacillus sakei subsp. sakei (strain 23K) (Lactobacillus sakei subsp. sakei).